The following is a 379-amino-acid chain: MSTISATVAGPSIVQFVQIDSLVVMKIVKHVDSEMYAGLNEVAGEACQGLLTGLVSIDDRRLEITNCFPTARAEPMLDGDEIAQNNAFYEEQKQAEMLDMLRKFRDMNIDYELVGFYQAHPFGACFAQETIDSLIDYQASVPDGVVLIYDPVKTRQGQLSIRAYRLSTKALEMSLDGDWSPESTRTAGLTYENMLEELPVVIKNSHLVNVMLAELALEGDCAIQRSSSHLELGTRRSLEKCLRSLMSDVDDLNRTVMAYTKYVADKQRYDLTVYNAMQKRQAENEQREARGEPPLSFDDIKKMKPPQLTTKCGMLESFLCSSDARAHSDYAAEACLRHFSFSSFCLCFFNENIAKLFLAEAVVDSHGSRDHGGAAASVR.

Positions 17–170 (VQIDSLVVMK…IRAYRLSTKA (154 aa)) constitute an MPN domain. Residues 280-291 (RQAENEQREARG) are compositionally biased toward basic and acidic residues. Residues 280-300 (RQAENEQREARGEPPLSFDDI) are disordered.

This sequence belongs to the eIF-3 subunit H family. In terms of assembly, component of the eukaryotic translation initiation factor 3 (eIF-3) complex.

It is found in the cytoplasm. Its function is as follows. Component of the eukaryotic translation initiation factor 3 (eIF-3) complex, which is involved in protein synthesis of a specialized repertoire of mRNAs and, together with other initiation factors, stimulates binding of mRNA and methionyl-tRNAi to the 40S ribosome. The eIF-3 complex specifically targets and initiates translation of a subset of mRNAs involved in cell proliferation. This chain is Eukaryotic translation initiation factor 3 subunit H, found in Brugia malayi (Filarial nematode worm).